Here is a 415-residue protein sequence, read N- to C-terminus: Gamma-glutamyl phosphate reductase (415 aa).

The protein belongs to the gamma-glutamyl phosphate reductase family.

The protein localises to the cytoplasm. The catalysed reaction is L-glutamate 5-semialdehyde + phosphate + NADP(+) = L-glutamyl 5-phosphate + NADPH + H(+). It functions in the pathway amino-acid biosynthesis; L-proline biosynthesis; L-glutamate 5-semialdehyde from L-glutamate: step 2/2. Functionally, catalyzes the NADPH-dependent reduction of L-glutamate 5-phosphate into L-glutamate 5-semialdehyde and phosphate. The product spontaneously undergoes cyclization to form 1-pyrroline-5-carboxylate. The chain is Gamma-glutamyl phosphate reductase from Listeria monocytogenes serotype 4a (strain HCC23).